A 322-amino-acid chain; its full sequence is Aspartate carbamoyltransferase catalytic subunit (322 aa).

Carbamoyl phosphate-binding residues include Arg65 and Thr66. Position 93 (Lys93) interacts with L-aspartate. Carbamoyl phosphate is bound by residues Arg115, His143, and Gln146. Residues Arg176 and Arg230 each contribute to the L-aspartate site. Carbamoyl phosphate-binding residues include Gly271 and Pro272.

Belongs to the aspartate/ornithine carbamoyltransferase superfamily. ATCase family. As to quaternary structure, heterododecamer (2C3:3R2) of six catalytic PyrB chains organized as two trimers (C3), and six regulatory PyrI chains organized as three dimers (R2).

The catalysed reaction is carbamoyl phosphate + L-aspartate = N-carbamoyl-L-aspartate + phosphate + H(+). The protein operates within pyrimidine metabolism; UMP biosynthesis via de novo pathway; (S)-dihydroorotate from bicarbonate: step 2/3. In terms of biological role, catalyzes the condensation of carbamoyl phosphate and aspartate to form carbamoyl aspartate and inorganic phosphate, the committed step in the de novo pyrimidine nucleotide biosynthesis pathway. The polypeptide is Aspartate carbamoyltransferase catalytic subunit (Brucella anthropi (strain ATCC 49188 / DSM 6882 / CCUG 24695 / JCM 21032 / LMG 3331 / NBRC 15819 / NCTC 12168 / Alc 37) (Ochrobactrum anthropi)).